Reading from the N-terminus, the 86-residue chain is Small ribosomal subunit protein uS17 (86 aa).

This sequence belongs to the universal ribosomal protein uS17 family. As to quaternary structure, part of the 30S ribosomal subunit.

One of the primary rRNA binding proteins, it binds specifically to the 5'-end of 16S ribosomal RNA. This is Small ribosomal subunit protein uS17 from Streptococcus thermophilus (strain CNRZ 1066).